Reading from the N-terminus, the 313-residue chain is Olfactory receptor 10P1 (313 aa).

At 1–25 (MAGENHTTLPEFLLLGFSDLKALQG) the chain is on the extracellular side. Residue N5 is glycosylated (N-linked (GlcNAc...) asparagine). A helical transmembrane segment spans residues 26 to 46 (PLFWVVLLVYLVTLLGNSLII). Over 47–54 (LLTQVSPA) the chain is Cytoplasmic. A helical membrane pass occupies residues 55 to 75 (LHSPMYFFLRQLSVVELFYTT). At 76–100 (DIVPRTLANLGSPHPQAISFQGCAA) the chain is on the extracellular side. The helical transmembrane segment at 101–121 (QMYVFIVLGISECCLLTAMAY) threads the bilayer. Topologically, residues 122–140 (DRYVAICQPLRYSTLLSPR) are cytoplasmic. A helical membrane pass occupies residues 141–161 (ACMAMVGTSWLTGIITATTHA). Over 162-198 (SLIFSLPFRSHPIIPHFLCDILPVLRLASAGKHRSEI) the chain is Extracellular. A helical membrane pass occupies residues 199–218 (SVMTATIVFIMIPFSLIVTS). Over 219 to 238 (YIRILGAILAMASTQSRRKV) the chain is Cytoplasmic. The chain crosses the membrane as a helical span at residues 239-259 (FSTCSSHLLVVSLFFGTASIT). Topologically, residues 260–272 (YIRPQAGSSVTTD) are extracellular. Residues 273–293 (RVLSLFYTVITPMLNPIIYTL) form a helical membrane-spanning segment. The Cytoplasmic portion of the chain corresponds to 294-313 (RNKDVRRALRHLVKRQRPSP).

The protein belongs to the G-protein coupled receptor 1 family.

Its subcellular location is the cell membrane. In terms of biological role, odorant receptor. In Homo sapiens (Human), this protein is Olfactory receptor 10P1 (OR10P1).